The sequence spans 596 residues: Elongation factor 4 (596 aa).

Positions 2–184 (KHIRNFSIIA…EIIAKIPPPV (183 aa)) constitute a tr-type G domain. GTP contacts are provided by residues 14–19 (DHGKST) and 131–134 (NKID).

This sequence belongs to the TRAFAC class translation factor GTPase superfamily. Classic translation factor GTPase family. LepA subfamily.

It is found in the cell inner membrane. It carries out the reaction GTP + H2O = GDP + phosphate + H(+). Required for accurate and efficient protein synthesis under certain stress conditions. May act as a fidelity factor of the translation reaction, by catalyzing a one-codon backward translocation of tRNAs on improperly translocated ribosomes. Back-translocation proceeds from a post-translocation (POST) complex to a pre-translocation (PRE) complex, thus giving elongation factor G a second chance to translocate the tRNAs correctly. Binds to ribosomes in a GTP-dependent manner. This is Elongation factor 4 from Shewanella frigidimarina (strain NCIMB 400).